Reading from the N-terminus, the 488-residue chain is Katanin p60 ATPase-containing subunit A-like 1 (488 aa).

Methionine 1 is modified (N-acetylmethionine). The segment at glycine 128 to phenylalanine 179 is disordered. The span at serine 142–methionine 167 shows a compositional bias: basic and acidic residues. Serine 172 is modified (phosphoserine). Glycine 246–threonine 253 contacts ATP.

Belongs to the AAA ATPase family. Katanin p60 subunit A1 subfamily. A-like 1 sub-subfamily. Interacts with KATNB1 and KATNBL1.

Its subcellular location is the cytoplasm. The protein localises to the cytoskeleton. The protein resides in the spindle pole. It localises to the spindle. The enzyme catalyses n ATP + n H2O + a microtubule = n ADP + n phosphate + (n+1) alpha/beta tubulin heterodimers.. Regulates microtubule dynamics in Sertoli cells, a process that is essential for spermiogenesis and male fertility. Severs microtubules in an ATP-dependent manner, promoting rapid reorganization of cellular microtubule arrays. Has microtubule-severing activity in vitro. The polypeptide is Katanin p60 ATPase-containing subunit A-like 1 (Katnal1) (Rattus norvegicus (Rat)).